Consider the following 315-residue polypeptide: 4-hydroxy-3-methylbut-2-enyl diphosphate reductase (315 aa).

[4Fe-4S] cluster is bound at residue Cys-12. (2E)-4-hydroxy-3-methylbut-2-enyl diphosphate-binding residues include His-41 and His-74. 2 residues coordinate dimethylallyl diphosphate: His-41 and His-74. Isopentenyl diphosphate contacts are provided by His-41 and His-74. Cys-96 contacts [4Fe-4S] cluster. A (2E)-4-hydroxy-3-methylbut-2-enyl diphosphate-binding site is contributed by His-124. Dimethylallyl diphosphate is bound at residue His-124. His-124 is an isopentenyl diphosphate binding site. Glu-126 (proton donor) is an active-site residue. Thr-168 is a (2E)-4-hydroxy-3-methylbut-2-enyl diphosphate binding site. Cys-198 contacts [4Fe-4S] cluster. The (2E)-4-hydroxy-3-methylbut-2-enyl diphosphate site is built by Ser-226, Ser-227, Asn-228, and Ser-270. The dimethylallyl diphosphate site is built by Ser-226, Ser-227, Asn-228, and Ser-270. Isopentenyl diphosphate-binding residues include Ser-226, Ser-227, Asn-228, and Ser-270.

This sequence belongs to the IspH family. Requires [4Fe-4S] cluster as cofactor.

The catalysed reaction is isopentenyl diphosphate + 2 oxidized [2Fe-2S]-[ferredoxin] + H2O = (2E)-4-hydroxy-3-methylbut-2-enyl diphosphate + 2 reduced [2Fe-2S]-[ferredoxin] + 2 H(+). It catalyses the reaction dimethylallyl diphosphate + 2 oxidized [2Fe-2S]-[ferredoxin] + H2O = (2E)-4-hydroxy-3-methylbut-2-enyl diphosphate + 2 reduced [2Fe-2S]-[ferredoxin] + 2 H(+). Its pathway is isoprenoid biosynthesis; dimethylallyl diphosphate biosynthesis; dimethylallyl diphosphate from (2E)-4-hydroxy-3-methylbutenyl diphosphate: step 1/1. It participates in isoprenoid biosynthesis; isopentenyl diphosphate biosynthesis via DXP pathway; isopentenyl diphosphate from 1-deoxy-D-xylulose 5-phosphate: step 6/6. Its function is as follows. Catalyzes the conversion of 1-hydroxy-2-methyl-2-(E)-butenyl 4-diphosphate (HMBPP) into a mixture of isopentenyl diphosphate (IPP) and dimethylallyl diphosphate (DMAPP). Acts in the terminal step of the DOXP/MEP pathway for isoprenoid precursor biosynthesis. The protein is 4-hydroxy-3-methylbut-2-enyl diphosphate reductase of Pseudomonas fluorescens (strain SBW25).